The sequence spans 450 residues: Glucose-6-phosphate isomerase (450 aa).

The Proton donor role is filled by Glu-290. Catalysis depends on residues His-311 and Lys-425.

Belongs to the GPI family.

It is found in the cytoplasm. The catalysed reaction is alpha-D-glucose 6-phosphate = beta-D-fructose 6-phosphate. It participates in carbohydrate biosynthesis; gluconeogenesis. It functions in the pathway carbohydrate degradation; glycolysis; D-glyceraldehyde 3-phosphate and glycerone phosphate from D-glucose: step 2/4. Functionally, catalyzes the reversible isomerization of glucose-6-phosphate to fructose-6-phosphate. The sequence is that of Glucose-6-phosphate isomerase from Leuconostoc mesenteroides subsp. mesenteroides (strain ATCC 8293 / DSM 20343 / BCRC 11652 / CCM 1803 / JCM 6124 / NCDO 523 / NBRC 100496 / NCIMB 8023 / NCTC 12954 / NRRL B-1118 / 37Y).